A 225-amino-acid chain; its full sequence is MNLIEFTLLDQTTPNSVISTTSNDLSNWSRLSSLWPLLYGTSCCFIEFASLIGSRFDFDRYGLVPRSSPRQADLILTAGTVTMKMAPSLVRLYEQMAEPKYVIAMGACTITGGMFSTDSYSTVRGVDKLIPVDVYLPGCPPKPEAVIDAITKLRKKISREISEDRVMSQRENRSFTTNHKFDIRRSTHTGNYDQGLFYQSSYTSEISSKRFFKSKNSVSSHELVN.

Residues C43, C44, C108, and C139 each contribute to the [4Fe-4S] cluster site.

This sequence belongs to the complex I 20 kDa subunit family. In terms of assembly, NDH is composed of at least 16 different subunits, 5 of which are encoded in the nucleus. [4Fe-4S] cluster serves as cofactor.

It localises to the plastid. It is found in the chloroplast thylakoid membrane. The enzyme catalyses a plastoquinone + NADH + (n+1) H(+)(in) = a plastoquinol + NAD(+) + n H(+)(out). It catalyses the reaction a plastoquinone + NADPH + (n+1) H(+)(in) = a plastoquinol + NADP(+) + n H(+)(out). NDH shuttles electrons from NAD(P)H:plastoquinone, via FMN and iron-sulfur (Fe-S) centers, to quinones in the photosynthetic chain and possibly in a chloroplast respiratory chain. The immediate electron acceptor for the enzyme in this species is believed to be plastoquinone. Couples the redox reaction to proton translocation, and thus conserves the redox energy in a proton gradient. In Dioscorea elephantipes (Elephant's foot yam), this protein is NAD(P)H-quinone oxidoreductase subunit K, chloroplastic.